Reading from the N-terminus, the 96-residue chain is UPF0235 protein Spro_4033 (96 aa).

The protein belongs to the UPF0235 family.

This chain is UPF0235 protein Spro_4033, found in Serratia proteamaculans (strain 568).